The primary structure comprises 359 residues: MDMENNLQDLKKKFNDIERNLENPTNLSQKEFITLSKEYSELRPIIKIIDEYNTLKEEISDLEEIMKDENSEGDIKELAKEEFFEKHKVLLPKIKAKLKLALLPKDEDDSRNAILEIRAGTGGEEAALFAAMLFRMYQKYAERRNWKFEPISISNTGIGGYKEASALINGTEVFARLKFESGVHRVQRVPETESSGRLHTSAATVAILPEVEEVDFKIEEKDLRIDVYRSSGPGGQSVNTTDSAVRVTHLPTGIVVIQQDEKSQHKNKAKALKVLRARLYEIERQKKEMERSTMRKSQIGSGDRSERIRTYNFPQSRITDHRINLTSHRLEQIIKEGELDEFIEALISRNEAERLAGES.

Position 236 is an N5-methylglutamine (Gln-236). Residues 286–305 (KKEMERSTMRKSQIGSGDRS) form a disordered region.

It belongs to the prokaryotic/mitochondrial release factor family. Methylated by PrmC. Methylation increases the termination efficiency of RF1.

It is found in the cytoplasm. In terms of biological role, peptide chain release factor 1 directs the termination of translation in response to the peptide chain termination codons UAG and UAA. This is Peptide chain release factor 1 from Wolbachia pipientis wMel.